Reading from the N-terminus, the 198-residue chain is V-type ATP synthase subunit E (198 aa).

It belongs to the V-ATPase E subunit family.

In terms of biological role, produces ATP from ADP in the presence of a proton gradient across the membrane. This is V-type ATP synthase subunit E from Clostridium novyi (strain NT).